Consider the following 1025-residue polypeptide: Retinoblastoma-related protein (1025 aa).

The tract at residues 1–20 is disordered; that stretch reads MEDHPPKPSIPTADASLSNH. The domain A stretch occupies residues 422-623; sequence TPVTTAMTTA…EKGSSMYNSL (202 aa). The segment at 422-875 is pocket; the sequence is TPVTTAMTTA…NEIFIPAVKP (454 aa). The interval 624 to 744 is spacer; sequence TVARPALSAE…PGAGGETCAE (121 aa). Positions 745–875 are domain B; that stretch reads TAINVFFSKI…NEIFIPAVKP (131 aa).

The protein belongs to the retinoblastoma protein (RB) family.

It is found in the nucleus. In terms of biological role, regulator of biological processes that recruits a histone deacetylase to control gene transcription. May play a role in the entry into mitosis, negatively regulating the cell proliferation. Formation of stable complexes with geminiviridae replication-associated proteins may create a cellular environment which favors viral DNA replication. This chain is Retinoblastoma-related protein (pRB), found in Camellia sinensis (Tea plant).